The sequence spans 400 residues: Diphosphomevalonate decarboxylase (400 aa).

(R)-5-diphosphomevalonate is bound by residues Y25–K28, R80, S155–R160, and T211.

The protein belongs to the diphosphomevalonate decarboxylase family. Homodimer.

It is found in the cytoplasm. The enzyme catalyses (R)-5-diphosphomevalonate + ATP = isopentenyl diphosphate + ADP + phosphate + CO2. It functions in the pathway steroid biosynthesis; cholesterol biosynthesis. Its function is as follows. Catalyzes the ATP dependent decarboxylation of (R)-5-diphosphomevalonate to form isopentenyl diphosphate (IPP). Functions in the mevalonate (MVA) pathway leading to isopentenyl diphosphate (IPP), a key precursor for the biosynthesis of isoprenoids and sterol synthesis. In Danio rerio (Zebrafish), this protein is Diphosphomevalonate decarboxylase (mvd).